A 476-amino-acid chain; its full sequence is Bifunctional protein HldE (476 aa).

A ribokinase region spans residues 1–318 (MKPILPDYNS…AEAVHGSQDT (318 aa)). An ATP-binding site is contributed by 195–198 (NMKE). The active site involves D264. The interval 344–476 (MTNGCFDILH…IINAIKGGKG (133 aa)) is cytidylyltransferase.

The protein in the N-terminal section; belongs to the carbohydrate kinase PfkB family. It in the C-terminal section; belongs to the cytidylyltransferase family. In terms of assembly, homodimer.

It carries out the reaction D-glycero-beta-D-manno-heptose 7-phosphate + ATP = D-glycero-beta-D-manno-heptose 1,7-bisphosphate + ADP + H(+). The catalysed reaction is D-glycero-beta-D-manno-heptose 1-phosphate + ATP + H(+) = ADP-D-glycero-beta-D-manno-heptose + diphosphate. It participates in nucleotide-sugar biosynthesis; ADP-L-glycero-beta-D-manno-heptose biosynthesis; ADP-L-glycero-beta-D-manno-heptose from D-glycero-beta-D-manno-heptose 7-phosphate: step 1/4. Its pathway is nucleotide-sugar biosynthesis; ADP-L-glycero-beta-D-manno-heptose biosynthesis; ADP-L-glycero-beta-D-manno-heptose from D-glycero-beta-D-manno-heptose 7-phosphate: step 3/4. It functions in the pathway bacterial outer membrane biogenesis; LPS core biosynthesis. In terms of biological role, catalyzes the phosphorylation of D-glycero-D-manno-heptose 7-phosphate at the C-1 position to selectively form D-glycero-beta-D-manno-heptose-1,7-bisphosphate. Catalyzes the ADP transfer from ATP to D-glycero-beta-D-manno-heptose 1-phosphate, yielding ADP-D-glycero-beta-D-manno-heptose. The polypeptide is Bifunctional protein HldE (Vibrio parahaemolyticus serotype O3:K6 (strain RIMD 2210633)).